A 237-amino-acid polypeptide reads, in one-letter code: Tetraspanin-8 (237 aa).

Over 1–9 (MAGVSACIK) the chain is Cytoplasmic. The helical transmembrane segment at 10 to 33 (YSMFTFNFLFWLCGILILALAIWV) threads the bilayer. Topologically, residues 34-57 (RVSNDSQAIFGSEDVGSSSYVAVD) are extracellular. A helical membrane pass occupies residues 58 to 72 (ILIAVGAIIMILGFL). The Cytoplasmic segment spans residues 73–83 (GCCGAIKESRC). A helical transmembrane segment spans residues 84–109 (MLLLFFIGLLLILLLQVATGILGAVF). Residues 110 to 205 (KSKSDRIVNE…SFIKDFLAKN (96 aa)) are Extracellular-facing. An N-linked (GlcNAc...) asparagine glycan is attached at asparagine 118. Residues 206 to 230 (LIIVIGISFGLAVIEILGLVFSMVL) traverse the membrane as a helical segment. Residues 231–237 (YCQIGNK) lie on the Cytoplasmic side of the membrane.

It belongs to the tetraspanin (TM4SF) family. Forms homooligomers. Interacts with MEP1B. Interacts with integrin alpha3/ITGA3. Interacts with RICTOR and MTOR. Interacts with ADAM17. Interacts with ECE1. In terms of tissue distribution, gastric, colon, rectal, and pancreatic carcinomas.

Its subcellular location is the cell membrane. In terms of biological role, structural component of specialized membrane microdomains known as tetraspanin-enriched microdomains (TERMs), which act as platforms for receptor clustering and signaling. Participates thereby in diverse biological functions such as cell signal transduction, migration and protein trafficking. Promotes ADAM17-mediated TNF-alpha processing through recruitment of ADAM17 to tetraspanin-enriched micro-domains (TEMs). Forms a complex with RICTOR and integrin alpha3/ITGA3 to mediate mTORC2 activation and AKT1 phosphorylation leading to cell migration. Reduces apoptosis and autophagy induced by high glucose levels through forming a complex with mTOR and RICTOR. Contributes to the maintenance of intestinal epithelial barrier and plays a role in the regulation of intestine inflammation by switching interferon gamma receptor 1/IFNGR1 from clathrin-dependent to lipid raft-dependent endocytosis route to limit STAT1 activation magnitude and duration. Acts as a modulator of the endothelin axis by associating with endothelin converting enzyme ECE1 and regulating its activity of conversion of the endothelin-1 precursor to endothelin. This is Tetraspanin-8 (TSPAN8) from Homo sapiens (Human).